Reading from the N-terminus, the 686-residue chain is Lysophospholipase 3 (686 aa).

Residues 1-26 (MIRPLCSKIIISYIFAISQFLLAANA) form the signal peptide. The PLA2c domain maps to 39–592 (SCPDDINLVR…KNYCWNGTLD (554 aa)). 14 N-linked (GlcNAc...) asparagine glycosylation sites follow: Asn56, Asn82, Asn129, Asn166, Asn221, Asn283, Asn313, Asn351, Asn495, Asn519, Asn547, Asn571, Asn588, and Asn614. Asn659 carries the GPI-anchor amidated asparagine lipid modification. Residues 660–686 (SGSHLSGISVKFSAMIMLTLLMFTGAV) constitute a propeptide, removed in mature form.

The protein belongs to the lysophospholipase family.

The protein resides in the cell membrane. It catalyses the reaction a 1-acyl-sn-glycero-3-phosphocholine + H2O = sn-glycerol 3-phosphocholine + a fatty acid + H(+). Its function is as follows. Sequentially removes both fatty acyl groups from diacylglycerophospholipids and therefore has both phospholipase A and lysophospholipase activities. Substrate preference is phosphatidylserine &gt; phosphatidylinositol. Does not cleave phosphatidylcholine, phosphatidylethanolamine, phosphatidic acid and phosphatidylinositol-bisphosphate. Mainly responsible for the degradation of phosphatidylinositol in vivo. In Saccharomyces cerevisiae (strain ATCC 204508 / S288c) (Baker's yeast), this protein is Lysophospholipase 3 (PLB3).